The sequence spans 423 residues: GTPase Obg (423 aa).

The Obg domain occupies 1–158 (MFIDTARIYI…MWVRLELKLL (158 aa)). One can recognise an OBG-type G domain in the interval 159 to 329 (ADVGLIGFPN…LLDKTIEILS (171 aa)). Residues 165–172 (GFPNAGKS), 190–194 (FTTLT), 211–214 (DIPG), 281–284 (NKID), and 310–312 (SAL) contribute to the GTP site. Mg(2+) is bound by residues Ser172 and Thr192. The OCT domain occupies 346–423 (TPPEEEETLN…VRDFEFEYYE (78 aa)).

The protein belongs to the TRAFAC class OBG-HflX-like GTPase superfamily. OBG GTPase family. Monomer. Requires Mg(2+) as cofactor.

It is found in the cytoplasm. Functionally, an essential GTPase which binds GTP, GDP and possibly (p)ppGpp with moderate affinity, with high nucleotide exchange rates and a fairly low GTP hydrolysis rate. Plays a role in control of the cell cycle, stress response, ribosome biogenesis and in those bacteria that undergo differentiation, in morphogenesis control. The sequence is that of GTPase Obg from Thermoanaerobacter pseudethanolicus (strain ATCC 33223 / 39E) (Clostridium thermohydrosulfuricum).